The following is a 136-amino-acid chain: Large ribosomal subunit protein uL16 (136 aa).

This sequence belongs to the universal ribosomal protein uL16 family. Part of the 50S ribosomal subunit.

Functionally, binds 23S rRNA and is also seen to make contacts with the A and possibly P site tRNAs. In Psychromonas ingrahamii (strain DSM 17664 / CCUG 51855 / 37), this protein is Large ribosomal subunit protein uL16.